An 89-amino-acid polypeptide reads, in one-letter code: Small ribosomal subunit protein uS19 (89 aa).

The protein belongs to the universal ribosomal protein uS19 family.

Protein S19 forms a complex with S13 that binds strongly to the 16S ribosomal RNA. This chain is Small ribosomal subunit protein uS19, found in Bacteroides thetaiotaomicron (strain ATCC 29148 / DSM 2079 / JCM 5827 / CCUG 10774 / NCTC 10582 / VPI-5482 / E50).